The following is a 228-amino-acid chain: LexA repressor (228 aa).

The H-T-H motif DNA-binding region spans 28–48 (IREIGEALDIRSTNGVNDHLK). Catalysis depends on for autocatalytic cleavage activity residues Ser-146 and Lys-183.

Belongs to the peptidase S24 family. As to quaternary structure, homodimer.

The catalysed reaction is Hydrolysis of Ala-|-Gly bond in repressor LexA.. Functionally, represses a number of genes involved in the response to DNA damage (SOS response), including recA and lexA. In the presence of single-stranded DNA, RecA interacts with LexA causing an autocatalytic cleavage which disrupts the DNA-binding part of LexA, leading to derepression of the SOS regulon and eventually DNA repair. In Anaeromyxobacter dehalogenans (strain 2CP-1 / ATCC BAA-258), this protein is LexA repressor.